The sequence spans 423 residues: Tegument protein UL43 (423 aa).

Polar residues predominate over residues 1–12 (MEKTPAETTAVS). The tract at residues 1–46 (MEKTPAETTAVSAGNVPRDSIPCITNVSADTRGRTRPSRPATVPQR) is disordered.

Belongs to the herpesviridae US22 family.

The protein resides in the virion tegument. In Homo sapiens (Human), this protein is Tegument protein UL43 (UL43).